The primary structure comprises 137 residues: Large ribosomal subunit protein uL16 (137 aa).

Belongs to the universal ribosomal protein uL16 family. Part of the 50S ribosomal subunit.

Its function is as follows. Binds 23S rRNA and is also seen to make contacts with the A and possibly P site tRNAs. This Rhodopseudomonas palustris (strain BisB18) protein is Large ribosomal subunit protein uL16.